The following is a 165-amino-acid chain: NADPH-dependent 7-cyano-7-deazaguanine reductase (165 aa).

C56 serves as the catalytic Thioimide intermediate. The active-site Proton donor is the D63. Substrate is bound by residues 78 to 80 (VES) and 97 to 98 (HE).

The protein belongs to the GTP cyclohydrolase I family. QueF type 1 subfamily.

It localises to the cytoplasm. It carries out the reaction 7-aminomethyl-7-carbaguanine + 2 NADP(+) = 7-cyano-7-deazaguanine + 2 NADPH + 3 H(+). The protein operates within tRNA modification; tRNA-queuosine biosynthesis. Functionally, catalyzes the NADPH-dependent reduction of 7-cyano-7-deazaguanine (preQ0) to 7-aminomethyl-7-deazaguanine (preQ1). This Bacillus mycoides (strain KBAB4) (Bacillus weihenstephanensis) protein is NADPH-dependent 7-cyano-7-deazaguanine reductase.